We begin with the raw amino-acid sequence, 617 residues long: Syncytin-A (617 aa).

A signal peptide spans 1–17 (MVRPWVFCLLLFPCSSA). At 18–544 (YSDSWMPLVN…WIQWLGLGPW (527 aa)) the chain is on the extracellular side. Residue Asn27 is glycosylated (N-linked (GlcNAc...) asparagine). The CXXC motif lies at 44-47 (CWVC). Cystine bridges form between Cys44–Cys47, Cys44–Cys505, and Cys497–Cys504. N-linked (GlcNAc...) asparagine glycans are attached at residues Asn272 and Asn365. Residues 420-440 (LLPLLAGLGIASALGLGIAGI) are fusion peptide. The short motif at 497–505 (CLFLQEECC) is the CX6CC element. Residues 545-565 (LPSWLTSLMAPILFILVLLVF) traverse the membrane as a helical segment. Residues 566-617 (RPCLLNCLTHSVSRRMSSFIHTTTEGHVDKILLLRESQYKRLPQEPPEEDAV) lie on the Cytoplasmic side of the membrane.

This sequence belongs to the gamma type-C retroviral envelope protein family. In terms of assembly, the mature protein consists of a trimer of SU-TM heterodimers. The SU-TM heterodimers are attached by a labile interchain disulfide bond. Post-translationally, synthesized as an inactive precursor that is heavily N-glycosylated and processed likely by furin in the Golgi to yield the mature SU and TM proteins. The cleavage site between SU and TM requires the minimal sequence [KR]-X-[KR]-R. In terms of processing, the CXXC motif is highly conserved across a broad range of retroviral envelope proteins. It is thought to participate in the formation of a labile disulfide bond possibly with the CX6CC motif present in the transmembrane protein. Isomerization of the intersubunit disulfide bond to an SU intrachain disulfide bond is thought to occur upon receptor recognition in order to allow membrane fusion. In terms of tissue distribution, highly expressed in placenta where it localizes to syncytiotrophoblasts of the labyrinthine zona. Specifically localizes to syncytiotrophoblast layer I (SynT-I). Also detected at very low levels in hippocampus, brain, testis and ovary.

The protein resides in the cell membrane. In terms of biological role, this endogenous retroviral envelope protein has retained its original fusogenic properties. Together with Synb, participates in trophoblast fusion and the formation of a syncytium during placenta morphogenesis. Syna is essential for placental development and is specifically required for formation of syncytiotrophoblast layer I (SynT-I). Promotes muscle myoblast fusion. Does not have immunosuppressive activity. This chain is Syncytin-A, found in Mus musculus (Mouse).